The sequence spans 528 residues: Lanosterol 14-alpha demethylase (528 aa).

Cysteine 470 lines the heme pocket.

The protein belongs to the cytochrome P450 family. It depends on heme as a cofactor.

The protein resides in the membrane. It catalyses the reaction a 14alpha-methyl steroid + 3 reduced [NADPH--hemoprotein reductase] + 3 O2 = a Delta(14) steroid + formate + 3 oxidized [NADPH--hemoprotein reductase] + 4 H2O + 4 H(+). It carries out the reaction a 14alpha-methyl steroid + reduced [NADPH--hemoprotein reductase] + O2 = a 14alpha-hydroxymethyl steroid + oxidized [NADPH--hemoprotein reductase] + H2O + H(+). The catalysed reaction is a 14alpha-hydroxymethyl steroid + reduced [NADPH--hemoprotein reductase] + O2 = a 14alpha-formyl steroid + oxidized [NADPH--hemoprotein reductase] + 2 H2O + H(+). The enzyme catalyses a 14alpha-formyl steroid + reduced [NADPH--hemoprotein reductase] + O2 = a Delta(14) steroid + formate + oxidized [NADPH--hemoprotein reductase] + H2O + 2 H(+). It catalyses the reaction lanosterol + 3 reduced [NADPH--hemoprotein reductase] + 3 O2 = 4,4-dimethyl-5alpha-cholesta-8,14,24-trien-3beta-ol + formate + 3 oxidized [NADPH--hemoprotein reductase] + 4 H2O + 4 H(+). It carries out the reaction lanosterol + reduced [NADPH--hemoprotein reductase] + O2 = 32-hydroxylanosterol + oxidized [NADPH--hemoprotein reductase] + H2O + H(+). The catalysed reaction is 32-hydroxylanosterol + reduced [NADPH--hemoprotein reductase] + O2 = 32-oxolanosterol + oxidized [NADPH--hemoprotein reductase] + 2 H2O + H(+). The enzyme catalyses 32-oxolanosterol + reduced [NADPH--hemoprotein reductase] + O2 = 4,4-dimethyl-5alpha-cholesta-8,14,24-trien-3beta-ol + formate + oxidized [NADPH--hemoprotein reductase] + H2O + 2 H(+). It catalyses the reaction eburicol + 3 reduced [NADPH--hemoprotein reductase] + 3 O2 = 14-demethyleburicol + formate + 3 oxidized [NADPH--hemoprotein reductase] + 4 H2O + 4 H(+). It carries out the reaction eburicol + reduced [NADPH--hemoprotein reductase] + O2 = 32-hydroxyeburicol + oxidized [NADPH--hemoprotein reductase] + H2O + H(+). The catalysed reaction is 32-hydroxyeburicol + reduced [NADPH--hemoprotein reductase] + O2 = 32-oxoeburicol + oxidized [NADPH--hemoprotein reductase] + 2 H2O + H(+). The enzyme catalyses 32-oxoeburicol + reduced [NADPH--hemoprotein reductase] + O2 = 14-demethyleburicol + formate + oxidized [NADPH--hemoprotein reductase] + H2O + 2 H(+). The protein operates within steroid biosynthesis; zymosterol biosynthesis; zymosterol from lanosterol: step 1/6. Its function is as follows. Sterol 14alpha-demethylase that plays a critical role in the third module of ergosterol biosynthesis pathway, being ergosterol the major sterol component in fungal membranes that participates in a variety of functions. The third module or late pathway involves the ergosterol synthesis itself through consecutive reactions that mainly occur in the endoplasmic reticulum (ER) membrane. In filamentous fungi, during the initial step of this module, lanosterol (lanosta-8,24-dien-3beta-ol) can be metabolized to eburicol. Sterol 14alpha-demethylase catalyzes the three-step oxidative removal of the 14alpha-methyl group (C-32) of both these sterols in the form of formate, and converts eburicol and lanosterol to 14-demethyleburicol (4,4,24-trimethylergosta-8,14,24(28)-trienol) and 4,4-dimethyl-5alpha-cholesta-8,14,24-trien-3beta-ol, respectively, which are further metabolized by other enzymes in the pathway to ergosterol. Can also use substrates not intrinsic to fungi, such as 24,25-dihydrolanosterol (DHL), producing 4,4-dimethyl-8,14-cholestadien-3-beta-ol, but at lower rates than the endogenous substrates. The protein is Lanosterol 14-alpha demethylase (ERG11) of Candida tropicalis (Yeast).